The primary structure comprises 348 residues: Phosphatidylinositol 3,4,5-trisphosphate 3-phosphatase ptn1 (348 aa).

Residues 18 to 189 (EKVNRSFAYL…YYIEILKQFP (172 aa)) enclose the Phosphatase tensin-type domain. C129 functions as the Phosphocysteine intermediate in the catalytic mechanism.

Its subcellular location is the cytoplasmic vesicle. The catalysed reaction is a 1,2-diacyl-sn-glycero-3-phospho-(1D-myo-inositol-3,4,5-trisphosphate) + H2O = a 1,2-diacyl-sn-glycero-3-phospho-(1D-myo-inositol-4,5-bisphosphate) + phosphate. It catalyses the reaction 1,2-dioctanoyl-sn-glycero-3-phospho-(1D-myo-inositol-3,4,5-trisphosphate) + H2O = 1,2-dioctanoyl-sn-glycero-3-phospho-(1D-myo-inositol-4,5-bisphosphate) + phosphate. The enzyme catalyses 1,2-dihexadecanoyl-sn-glycero-3-phospho-(1D-myo-inositol-3,4,5-trisphosphate) + H2O = 1,2-dihexadecanoyl-sn-glycero-3-phospho-(1D-myo-inositol-4,5-bisphosphate) + phosphate. In terms of biological role, acts as a phosphoinositide 3-phosphatase and regulates PtdIns(3,4,5)P3 levels. The sequence is that of Phosphatidylinositol 3,4,5-trisphosphate 3-phosphatase ptn1 (ptn1) from Schizosaccharomyces pombe (strain 972 / ATCC 24843) (Fission yeast).